Reading from the N-terminus, the 733-residue chain is Phosphoribosylformylglycinamidine synthase subunit PurL (733 aa).

Residue histidine 32 is part of the active site. Residue tyrosine 35 coordinates ATP. Residue glutamate 81 coordinates Mg(2+). Substrate-binding positions include 82–85 (SHNH) and arginine 104. The active-site Proton acceptor is the histidine 83. Residue aspartate 105 coordinates Mg(2+). Glutamine 230 contributes to the substrate binding site. Residue aspartate 258 participates in Mg(2+) binding. Residue 301–303 (ESQ) participates in substrate binding. The ATP site is built by aspartate 482 and glycine 519. Position 520 (asparagine 520) interacts with Mg(2+). Substrate is bound at residue serine 522.

Belongs to the FGAMS family. In terms of assembly, monomer. Part of the FGAM synthase complex composed of 1 PurL, 1 PurQ and 2 PurS subunits.

The protein resides in the cytoplasm. The catalysed reaction is N(2)-formyl-N(1)-(5-phospho-beta-D-ribosyl)glycinamide + L-glutamine + ATP + H2O = 2-formamido-N(1)-(5-O-phospho-beta-D-ribosyl)acetamidine + L-glutamate + ADP + phosphate + H(+). It functions in the pathway purine metabolism; IMP biosynthesis via de novo pathway; 5-amino-1-(5-phospho-D-ribosyl)imidazole from N(2)-formyl-N(1)-(5-phospho-D-ribosyl)glycinamide: step 1/2. Its function is as follows. Part of the phosphoribosylformylglycinamidine synthase complex involved in the purines biosynthetic pathway. Catalyzes the ATP-dependent conversion of formylglycinamide ribonucleotide (FGAR) and glutamine to yield formylglycinamidine ribonucleotide (FGAM) and glutamate. The FGAM synthase complex is composed of three subunits. PurQ produces an ammonia molecule by converting glutamine to glutamate. PurL transfers the ammonia molecule to FGAR to form FGAM in an ATP-dependent manner. PurS interacts with PurQ and PurL and is thought to assist in the transfer of the ammonia molecule from PurQ to PurL. The sequence is that of Phosphoribosylformylglycinamidine synthase subunit PurL from Methanocaldococcus jannaschii (strain ATCC 43067 / DSM 2661 / JAL-1 / JCM 10045 / NBRC 100440) (Methanococcus jannaschii).